The sequence spans 51 residues: Light-harvesting protein B-800/850 beta chain (51 aa).

The Cytoplasmic segment spans residues 2–23 (ADDANKVWPSGLTTAEAEELQK). A helical membrane pass occupies residues 24-46 (GLVDGTRVFGVIAVLAHILAYAY). His-40 is an a bacteriochlorophyll binding site. The Periplasmic segment spans residues 47 to 51 (TPWLH).

This sequence belongs to the antenna complex beta subunit family. As to quaternary structure, an alpha/beta heterodimer conjugated to 3 bacteriochlorophyll molecules. The core complex is formed by different alpha and beta chains, binding bacteriochlorophyll molecules, and arranged most probably in tetrameric structures disposed around the reaction center. The non-pigmented gamma chains may constitute additional components.

The protein resides in the cell inner membrane. In terms of biological role, antenna complexes are light-harvesting systems, which transfer the excitation energy to the reaction centers. The protein is Light-harvesting protein B-800/850 beta chain (pucB) of Rubrivivax gelatinosus (Rhodocyclus gelatinosus).